The chain runs to 263 residues: Small ribosomal subunit protein eS1 (263 aa).

Residues 235-263 (HGEGGGGKGEAGDKSERPEGYEPPVQESV) form a disordered region. Positions 244–254 (EAGDKSERPEG) are enriched in basic and acidic residues.

The protein belongs to the eukaryotic ribosomal protein eS1 family. As to quaternary structure, component of the small ribosomal subunit. Mature ribosomes consist of a small (40S) and a large (60S) subunit. The 40S subunit contains about 33 different proteins and 1 molecule of RNA (18S). The 60S subunit contains about 49 different proteins and 3 molecules of RNA (28S, 5.8S and 5S).

The protein localises to the cytoplasm. The sequence is that of Small ribosomal subunit protein eS1 from Bombyx mori (Silk moth).